A 366-amino-acid polypeptide reads, in one-letter code: Chorismate synthase (366 aa).

The NADP(+) site is built by R48 and R54. FMN is bound by residues 125 to 127 (RSS), 238 to 239 (NA), G278, 293 to 297 (KPTSS), and R319.

Belongs to the chorismate synthase family. Homotetramer. Requires FMNH2 as cofactor.

It catalyses the reaction 5-O-(1-carboxyvinyl)-3-phosphoshikimate = chorismate + phosphate. It functions in the pathway metabolic intermediate biosynthesis; chorismate biosynthesis; chorismate from D-erythrose 4-phosphate and phosphoenolpyruvate: step 7/7. In terms of biological role, catalyzes the anti-1,4-elimination of the C-3 phosphate and the C-6 proR hydrogen from 5-enolpyruvylshikimate-3-phosphate (EPSP) to yield chorismate, which is the branch point compound that serves as the starting substrate for the three terminal pathways of aromatic amino acid biosynthesis. This reaction introduces a second double bond into the aromatic ring system. The polypeptide is Chorismate synthase (Neisseria meningitidis serogroup A / serotype 4A (strain DSM 15465 / Z2491)).